Consider the following 184-residue polypeptide: MSSNSINAEARAELAELIKELAVVHGEVTLSSGKKADYYIDVRRATLHARASRLIGQLLREATADWDYDAVGGLTLGADPVATAIMHADGRDINAFVVRKEAKKHGMQRRIEGPDLTGKKVLVVEDTTTTGNSPLTAVAALREAGIEVVGVATVVDRATGADEVIAAEGLPYRSLLGLSDLGLN.

5-phospho-alpha-D-ribose 1-diphosphate contacts are provided by residues arginine 99, lysine 100, lysine 103, histidine 105, and 125 to 133 (EDTTTTGNS). Residues threonine 129 and arginine 157 each contribute to the orotate site.

The protein belongs to the purine/pyrimidine phosphoribosyltransferase family. PyrE subfamily. In terms of assembly, homodimer. Mg(2+) is required as a cofactor.

It carries out the reaction orotidine 5'-phosphate + diphosphate = orotate + 5-phospho-alpha-D-ribose 1-diphosphate. Its pathway is pyrimidine metabolism; UMP biosynthesis via de novo pathway; UMP from orotate: step 1/2. Functionally, catalyzes the transfer of a ribosyl phosphate group from 5-phosphoribose 1-diphosphate to orotate, leading to the formation of orotidine monophosphate (OMP). This is Orotate phosphoribosyltransferase from Corynebacterium glutamicum (strain ATCC 13032 / DSM 20300 / JCM 1318 / BCRC 11384 / CCUG 27702 / LMG 3730 / NBRC 12168 / NCIMB 10025 / NRRL B-2784 / 534).